Reading from the N-terminus, the 679-residue chain is Enzymatic polyprotein (679 aa).

The protease stretch occupies residues 40 to 130; it reads LHCFVDTGAS…LYEPFIQFTD (91 aa). The active site involves Asp-45. A Reverse transcriptase domain is found at 272 to 452; sequence LKVIKPSKSP…KKINFLGLEI (181 aa).

It belongs to the caulimoviridae enzymatic polyprotein family.

It carries out the reaction DNA(n) + a 2'-deoxyribonucleoside 5'-triphosphate = DNA(n+1) + diphosphate. In terms of biological role, encodes for at least two polypeptides: protease (PR) and reverse transcriptase (RT). The protease processes the polyprotein in cis. Reverse transcriptase is multifunctional enzyme that converts the viral RNA genome into dsDNA in viral cytoplasmic capsids. This enzyme displays a DNA polymerase activity that can copy either DNA or RNA templates, and a ribonuclease H (RNase H) activity that cleaves the RNA strand of RNA-DNA heteroduplexes in a partially processive 3'- to 5'-endonucleasic mode. Neo-synthesized pregenomic RNA (pgRNA) are encapsidated, and reverse-transcribed inside the nucleocapsid. Partial (+)DNA is synthesized from the (-)DNA template and generates the relaxed circular DNA (RC-DNA) genome. After budding and infection, the RC-DNA migrates in the nucleus, and is converted into a plasmid-like covalently closed circular DNA (cccDNA). This chain is Enzymatic polyprotein, found in Arabidopsis thaliana (Mouse-ear cress).